The following is a 310-amino-acid chain: Porphobilinogen deaminase (310 aa).

Cysteine 241 is modified (S-(dipyrrolylmethanemethyl)cysteine).

The protein belongs to the HMBS family. Monomer. Dipyrromethane serves as cofactor.

The catalysed reaction is 4 porphobilinogen + H2O = hydroxymethylbilane + 4 NH4(+). Its pathway is porphyrin-containing compound metabolism; protoporphyrin-IX biosynthesis; coproporphyrinogen-III from 5-aminolevulinate: step 2/4. In terms of biological role, tetrapolymerization of the monopyrrole PBG into the hydroxymethylbilane pre-uroporphyrinogen in several discrete steps. The polypeptide is Porphobilinogen deaminase (Lysinibacillus sphaericus (strain C3-41)).